A 469-amino-acid polypeptide reads, in one-letter code: UTP--glucose-1-phosphate uridylyltransferase 2 (469 aa).

An N-acetylalanine modification is found at Ala2. Residues 85–88, Lys99, Gln162, and Gly191 contribute to the UTP site; that span reads LNGG. Residue 87-88 coordinates substrate; that stretch reads GG. Substrate-binding positions include His192 and 220–222; that span reads NSD. Residues Asp222 and Lys360 each contribute to the UTP site.

The protein belongs to the UDPGP type 1 family. Expressed in cauline leaves, flowers and siliques.

It localises to the cytoplasm. It catalyses the reaction alpha-D-glucose 1-phosphate + UTP + H(+) = UDP-alpha-D-glucose + diphosphate. Its function is as follows. Converts glucose 1-phosphate to UDP-glucose, which is the major glycosyl donor for polysaccharides. Acts redundantly with UGP1 and is essential for the synthesis of sucrose, starch and cell wall, and callose deposition. This Arabidopsis thaliana (Mouse-ear cress) protein is UTP--glucose-1-phosphate uridylyltransferase 2.